A 124-amino-acid chain; its full sequence is Kinocilin (124 aa).

2 consecutive transmembrane segments (helical) span residues 13–33 and 40–60; these read LQLA…GVSV and VGGI…YPFL. The interval 80-124 is disordered; the sequence is PNSGPDHGEGRSSNNSNKEGARSGLSTVTRTLEKLKPGGRGTEEG. Polar residues predominate over residues 90–109; it reads RSSNNSNKEGARSGLSTVTR. Residues 110-124 show a composition bias toward basic and acidic residues; that stretch reads TLEKLKPGGRGTEEG.

Preferentially expressed in the inner ear and testis. Localizes mainly in the kinocilium of sensory cells in the inner ear. Also present in the manchette of the spermatids, a transient structure enriched in interconnected microtubules (at protein level).

It is found in the membrane. In terms of biological role, may play a role in stabilizing dense microtubular networks or in vesicular trafficking. The sequence is that of Kinocilin (Kncn) from Mus musculus (Mouse).